A 1021-amino-acid chain; its full sequence is MKTPLLVSHLLLISLTSCLGEFTWHRRYGHGVSEEDKGFGPIFEEQPINTIYPEESLEGKVSLNCRARASPFPVYKWRMNNGDVDLTNDRYSMVGGNLVINNPDKQKDAGIYYCLASNNYGMVRSTEATLSFGYLDPFPPEDRPEVKVKEGKGMVLLCDPPYHFPDDLSYRWLLNEFPVFITMDKRRFVSQTNGNLYIANVESSDRGNYSCFVSSPSITKSVFSKFIPLIPIPERTTKPYPADIVVQFKDIYTMMGQNVTLECFALGNPVPDIRWRKVLEPMPTTAEISTSGAVLKIFNIQLEDEGLYECEAENIRGKDKHQARIYVQAFPEWVEHINDTEVDIGSDLYWPCVATGKPIPTIRWLKNGYAYHKGELRLYDVTFENAGMYQCIAENAYGTIYANAELKILALAPTFEMNPMKKKILAAKGGRVIIECKPKAAPKPKFSWSKGTEWLVNSSRILIWEDGSLEINNITRNDGGIYTCFAENNRGKANSTGTLVITNPTRIILAPINADITVGENATMQCAASFDPSLDLTFVWSFNGYVIDFNKEITNIHYQRNFMLDANGELLIRNAQLKHAGRYTCTAQTIVDNSSASADLVVRGPPGPPGGLRIEDIRATSVALTWSRGSDNHSPISKYTIQTKTILSDDWKDAKTDPPIIEGNMESAKAVDLIPWMEYEFRVVATNTLGTGEPSIPSNRIKTDGAAPNVAPSDVGGGGGTNRELTITWAPLSREYHYGNNFGYIVAFKPFDGEEWKKVTVTNPDTGRYVHKDETMTPSTAFQVKVKAFNNKGDGPYSLIAVINSAQDAPSEAPTEVGVKVLSSSEISVHWKHVLEKIVESYQIRYWAGHDKEAAAHRVQVTSQEYSARLENLLPDTQYFIEVGACNSAGCGPSSDVIETFTRKAPPSQPPRIISSVRSGSRYIITWDHVVALSNESTVTGYKILYRPDGQHDGKLFSTHKHSIEVPIPRDGEYVVEVRAHSDGGDGVVSQVKISGVSTLSSGLLSLLLPSLGFLVFYSEF.

The first 20 residues, M1–G20, serve as a signal peptide directing secretion. Ig-like C2-type domains lie at P41–S131, P137–F223, P241–Y326, P331–K407, P413–V500, and P504–R603. Cystine bridges form between C65–C114 and C158–C211. 2 N-linked (GlcNAc...) asparagine glycosylation sites follow: N208 and N258. A disulfide bridge links C263 with C310. An N-linked (GlcNAc...) asparagine glycan is attached at N338. 2 disulfides stabilise this stretch: C352/C391 and C436/C484. N-linked (GlcNAc...) asparagine glycosylation is found at N457, N473, N494, and N521. Residues C526 and C585 are joined by a disulfide bond. A glycan (N-linked (GlcNAc...) asparagine) is linked at N593. Fibronectin type-III domains lie at P608 to A706, A711 to D808, A813 to S908, and Q909 to S1002. Positions S695–G719 are disordered. The N-linked (GlcNAc...) asparagine glycan is linked to N935. S1001 carries GPI-anchor amidated serine lipidation. The propeptide at S1002–F1021 is removed in mature form.

It belongs to the immunoglobulin superfamily. Contactin family. As to quaternary structure, monomer. Interacts with NOTCH1. Interacts with CNTNAP1 in cis form and TNR. Binds to the carbonic-anhydrase like domain of PTPRZ1. Detected in a complex with NRCAM and PTPRB. Interacts with TASOR. In terms of tissue distribution, expressed by neurons, oligodendrocytes and their progenitors (at protein level). Myelination regulates the expression being down-regulated when neurons are in contact with Schwann cells.

The protein localises to the cell membrane. Contactins mediate cell surface interactions during nervous system development. Involved in the formation of paranodal axo-glial junctions in myelinated peripheral nerves and in the signaling between axons and myelinating glial cells via its association with CNTNAP1. Participates in oligodendrocytes generation by acting as a ligand of NOTCH1. Its association with NOTCH1 promotes NOTCH1 activation through the released notch intracellular domain (NICD) and subsequent translocation to the nucleus. Interaction with TNR induces a repulsion of neurons and an inhibition of neurite outgrowth. The chain is Contactin-1 (Cntn1) from Rattus norvegicus (Rat).